Reading from the N-terminus, the 249-residue chain is MSASHALILLRHGNSEWNRQNLFTGWVDVRLSEQGVAEAKRAGELLAESGLVPDILYTSLLTRAIQTANHALDAADRLWIPVVRSWRLNERHYGALQGLDKAETLEKYGPEQFQLWRRSFDVPPPPLADDSEWSQADDPRYADLGADLPRTECLKDVIARMLPFWESDITTSLSAGKTVLVTAHGNSLRALVKHLDGISDDDIAELNIPTGVPLVYKLDDSFKPVEPAAYLDPEAAAVGAAAVAAQGKK.

Substrate is bound by residues 11-18 (RHGNSEWN), 24-25 (TG), R63, 90-93 (ERHY), K101, 117-118 (RR), and 185-186 (GN). The active-site Tele-phosphohistidine intermediate is H12. The active-site Proton donor/acceptor is the E90.

The protein belongs to the phosphoglycerate mutase family. BPG-dependent PGAM subfamily.

It catalyses the reaction (2R)-2-phosphoglycerate = (2R)-3-phosphoglycerate. It functions in the pathway carbohydrate degradation; glycolysis; pyruvate from D-glyceraldehyde 3-phosphate: step 3/5. Its function is as follows. Catalyzes the interconversion of 2-phosphoglycerate and 3-phosphoglycerate. This is 2,3-bisphosphoglycerate-dependent phosphoglycerate mutase from Leifsonia xyli subsp. xyli (strain CTCB07).